The sequence spans 1125 residues: Phytochrome A (1125 aa).

Composition is skewed to low complexity over residues M1–A14 and S39–S48. Disordered stretches follow at residues M1–I22 and E38–D64. One can recognise a GAF domain in the interval S218–L401. Residue C323 participates in phytochromobilin binding. 2 PAS domains span residues V617–K687 and D750–G821. The Histidine kinase domain occupies Y901 to G1117.

Belongs to the phytochrome family. In terms of assembly, homodimer. In terms of processing, contains one covalently linked phytochromobilin chromophore.

Functionally, regulatory photoreceptor which exists in two forms that are reversibly interconvertible by light: the Pr form that absorbs maximally in the red region of the spectrum and the Pfr form that absorbs maximally in the far-red region. Photoconversion of Pr to Pfr induces an array of morphogenic responses, whereas reconversion of Pfr to Pr cancels the induction of those responses. Pfr controls the expression of a number of nuclear genes including those encoding the small subunit of ribulose-bisphosphate carboxylase, chlorophyll A/B binding protein, protochlorophyllide reductase, rRNA, etc. It also controls the expression of its own gene(s) in a negative feedback fashion. In Populus tremuloides (Quaking aspen), this protein is Phytochrome A (PHYA).